Consider the following 657-residue polypeptide: uncharacterized protein (657 aa).

An N-terminal signal peptide occupies residues 1–17 (MACVLACVAVLIGAASA).

This is an uncharacterized protein from Orgyia pseudotsugata (Douglas-fir tussock moth).